We begin with the raw amino-acid sequence, 218 residues long: Glutathione S-transferase PM239X14 (218 aa).

The GST N-terminal domain occupies 2-85 (VTVKLYGMAY…YLVAKYGKGS (84 aa)). Residues 12–13 (ST), 41–42 (HK), 55–56 (VI), and 69–70 (ES) each bind glutathione. One can recognise a GST C-terminal domain in the interval 93-218 (DPKAYGLFEQ…LLRNSSKEFM (126 aa)).

This sequence belongs to the GST superfamily. Phi family. As to expression, expressed in vegetative rosettes.

It is found in the cytoplasm. The protein localises to the cytosol. It carries out the reaction RX + glutathione = an S-substituted glutathione + a halide anion + H(+). Functionally, specifically catalyzes the conjugation of synthetic 1-chloro-2,4-ditrobenzene to GSH. Also functions as a glutathione peroxidase, converting linoleate oxidation products into their corresponding hydroxyacids. This enzyme may thus serve to protect the cell from oxygen toxicity as well as from exogenous toxins such as herbicides. This Arabidopsis thaliana (Mouse-ear cress) protein is Glutathione S-transferase PM239X14.